The chain runs to 124 residues: Ribonuclease P protein component 2 (124 aa).

The protein belongs to the eukaryotic/archaeal RNase P protein component 2 family. In terms of assembly, consists of a catalytic RNA component and at least 4-5 protein subunits.

The protein localises to the cytoplasm. It carries out the reaction Endonucleolytic cleavage of RNA, removing 5'-extranucleotides from tRNA precursor.. Its function is as follows. Part of ribonuclease P, a protein complex that generates mature tRNA molecules by cleaving their 5'-ends. This is Ribonuclease P protein component 2 from Methanothermobacter thermautotrophicus (strain ATCC 29096 / DSM 1053 / JCM 10044 / NBRC 100330 / Delta H) (Methanobacterium thermoautotrophicum).